The primary structure comprises 436 residues: Elongation factor 1-alpha (436 aa).

Residues 8–232 enclose the tr-type G domain; sequence KPHLNMIVTG…DDFKMAEKPV (225 aa). Residues 17-24 form a G1 region; it reads GHIDNGKS. 17-24 lines the GTP pocket; that stretch reads GHIDNGKS. Serine 24 lines the Mg(2+) pocket. Residues 74-78 form a G2 region; that stretch reads GITID. The G3 stretch occupies residues 95 to 98; sequence DAPG. GTP is bound by residues 95 to 99 and 157 to 160; these read DAPGH and NKMD. The tract at residues 157-160 is G4; sequence NKMD. Positions 196-198 are G5; that stretch reads SGW.

The protein belongs to the TRAFAC class translation factor GTPase superfamily. Classic translation factor GTPase family. EF-Tu/EF-1A subfamily.

Its subcellular location is the cytoplasm. The catalysed reaction is GTP + H2O = GDP + phosphate + H(+). In terms of biological role, GTP hydrolase that promotes the GTP-dependent binding of aminoacyl-tRNA to the A-site of ribosomes during protein biosynthesis. The sequence is that of Elongation factor 1-alpha from Cenarchaeum symbiosum (strain A).